Consider the following 305-residue polypeptide: Homoserine kinase (305 aa).

93 to 103 (PLSRGLGSSAT) contributes to the ATP binding site.

This sequence belongs to the GHMP kinase family. Homoserine kinase subfamily.

The protein localises to the cytoplasm. The catalysed reaction is L-homoserine + ATP = O-phospho-L-homoserine + ADP + H(+). Its pathway is amino-acid biosynthesis; L-threonine biosynthesis; L-threonine from L-aspartate: step 4/5. Functionally, catalyzes the ATP-dependent phosphorylation of L-homoserine to L-homoserine phosphate. The chain is Homoserine kinase from Picosynechococcus sp. (strain ATCC 27264 / PCC 7002 / PR-6) (Agmenellum quadruplicatum).